A 533-amino-acid chain; its full sequence is E3 ubiquitin-protein ligase arih1l (533 aa).

Disordered regions lie at residues M1–D35 and P48–E73. Positions Q158–N369 are TRIAD supradomain. Zn(2+)-binding residues include C162, C165, C179, H181, C184, C187, C207, C212, C252, C257, C273, C275, C280, C283, H288, C293, C320, and C323. The RING-type 1 zinc finger occupies C162 to C212. The segment at L232–C293 adopts an IBR-type zinc-finger fold. The segment at C320 to C351 adopts an RING-type 2; atypical zinc-finger fold. Residue C333 is part of the active site. Residues C338, C343, C348, C351, H358, and C365 each coordinate Zn(2+). The stretch at K409–N425 forms a coiled coil.

The protein belongs to the RBR family. Ariadne subfamily.

It localises to the cytoplasm. The catalysed reaction is [E2 ubiquitin-conjugating enzyme]-S-ubiquitinyl-L-cysteine + [acceptor protein]-L-lysine = [E2 ubiquitin-conjugating enzyme]-L-cysteine + [acceptor protein]-N(6)-ubiquitinyl-L-lysine.. It functions in the pathway protein modification; protein ubiquitination. Functionally, E3 ubiquitin-protein ligase, which catalyzes polyubiquitination of target proteins together with ubiquitin-conjugating enzyme E2 ube2l3. In Danio rerio (Zebrafish), this protein is E3 ubiquitin-protein ligase arih1l (arih1l).